The primary structure comprises 142 residues: Large ribosomal subunit protein uL13 (142 aa).

This sequence belongs to the universal ribosomal protein uL13 family. In terms of assembly, part of the 50S ribosomal subunit.

Functionally, this protein is one of the early assembly proteins of the 50S ribosomal subunit, although it is not seen to bind rRNA by itself. It is important during the early stages of 50S assembly. The sequence is that of Large ribosomal subunit protein uL13 from Methanosphaera stadtmanae (strain ATCC 43021 / DSM 3091 / JCM 11832 / MCB-3).